Consider the following 224-residue polypeptide: MKNSMYLPFPSKGLYAITPDRLQGDALLAAAESAILGGAAVVQYRPKSGPASDRLSDGIRLQELCRTAGIPLIVNDSPRLAAEIGADGVHLGKNDGSVAAARHVLGDRAIVGISCYDSLERALRAEAEGANYVAFGALFPSATKPCASRARLETLREAGTRLQIPIAAIGGIDTTNAGQVIGAGADLVAAVEAVFGAADVARAARELCSLFHAPRKRRPRCDDA.

4-amino-2-methyl-5-(diphosphooxymethyl)pyrimidine contacts are provided by residues 43 to 47 (QYRPK) and asparagine 75. Positions 76 and 95 each coordinate Mg(2+). Serine 114 serves as a coordination point for 4-amino-2-methyl-5-(diphosphooxymethyl)pyrimidine. 141–143 (SAT) is a 2-[(2R,5Z)-2-carboxy-4-methylthiazol-5(2H)-ylidene]ethyl phosphate binding site. Residue lysine 144 coordinates 4-amino-2-methyl-5-(diphosphooxymethyl)pyrimidine. Glycine 171 serves as a coordination point for 2-[(2R,5Z)-2-carboxy-4-methylthiazol-5(2H)-ylidene]ethyl phosphate.

It belongs to the thiamine-phosphate synthase family. Mg(2+) is required as a cofactor.

It catalyses the reaction 2-[(2R,5Z)-2-carboxy-4-methylthiazol-5(2H)-ylidene]ethyl phosphate + 4-amino-2-methyl-5-(diphosphooxymethyl)pyrimidine + 2 H(+) = thiamine phosphate + CO2 + diphosphate. The catalysed reaction is 2-(2-carboxy-4-methylthiazol-5-yl)ethyl phosphate + 4-amino-2-methyl-5-(diphosphooxymethyl)pyrimidine + 2 H(+) = thiamine phosphate + CO2 + diphosphate. It carries out the reaction 4-methyl-5-(2-phosphooxyethyl)-thiazole + 4-amino-2-methyl-5-(diphosphooxymethyl)pyrimidine + H(+) = thiamine phosphate + diphosphate. It participates in cofactor biosynthesis; thiamine diphosphate biosynthesis; thiamine phosphate from 4-amino-2-methyl-5-diphosphomethylpyrimidine and 4-methyl-5-(2-phosphoethyl)-thiazole: step 1/1. Condenses 4-methyl-5-(beta-hydroxyethyl)thiazole monophosphate (THZ-P) and 2-methyl-4-amino-5-hydroxymethyl pyrimidine pyrophosphate (HMP-PP) to form thiamine monophosphate (TMP). The protein is Thiamine-phosphate synthase of Methylococcus capsulatus (strain ATCC 33009 / NCIMB 11132 / Bath).